The sequence spans 803 residues: Carbon monoxide dehydrogenase large chain (803 aa).

Arg384 is modified (4-hydroxyarginine). Cys385 provides a ligand contact to Cu(+). Glu757 is a binding site for Mo-molybdopterin cytosine dinucleotide.

Dimer of heterotrimers. Each heterotrimer consists of a large, a medium and a small subunit. Requires Cu(+) as cofactor. Mo-molybdopterin cytosine dinucleotide is required as a cofactor.

The enzyme catalyses CO + a quinone + H2O = a quinol + CO2. Its function is as follows. Catalyzes the oxidation of carbon monoxide to carbon dioxide. The protein is Carbon monoxide dehydrogenase large chain (cutL) of Hydrogenophaga pseudoflava (Pseudomonas carboxydoflava).